Here is a 542-residue protein sequence, read N- to C-terminus: CTP synthase (542 aa).

An amidoligase domain region spans residues 1-265 (MTRYIFVTGG…DDFVVERFGL (265 aa)). CTP is bound at residue serine 13. Serine 13 lines the UTP pocket. ATP contacts are provided by residues 14–19 (SLGKGI) and aspartate 71. The Mg(2+) site is built by aspartate 71 and glutamate 139. Residues 146-148 (DIE), 186-191 (KTKPTQ), and lysine 222 contribute to the CTP site. UTP contacts are provided by residues 186 to 191 (KTKPTQ) and lysine 222. A Glutamine amidotransferase type-1 domain is found at 290-541 (TIAMVGKYME…VKAALAQKNK (252 aa)). L-glutamine is bound at residue glycine 351. The active-site Nucleophile; for glutamine hydrolysis is the cysteine 378. L-glutamine contacts are provided by residues 379–382 (LGMQ), glutamate 402, and arginine 469. Catalysis depends on residues histidine 514 and glutamate 516.

Belongs to the CTP synthase family. In terms of assembly, homotetramer.

The catalysed reaction is UTP + L-glutamine + ATP + H2O = CTP + L-glutamate + ADP + phosphate + 2 H(+). It carries out the reaction L-glutamine + H2O = L-glutamate + NH4(+). It catalyses the reaction UTP + NH4(+) + ATP = CTP + ADP + phosphate + 2 H(+). It functions in the pathway pyrimidine metabolism; CTP biosynthesis via de novo pathway; CTP from UDP: step 2/2. Allosterically activated by GTP, when glutamine is the substrate; GTP has no effect on the reaction when ammonia is the substrate. The allosteric effector GTP functions by stabilizing the protein conformation that binds the tetrahedral intermediate(s) formed during glutamine hydrolysis. Inhibited by the product CTP, via allosteric rather than competitive inhibition. Its function is as follows. Catalyzes the ATP-dependent amination of UTP to CTP with either L-glutamine or ammonia as the source of nitrogen. Regulates intracellular CTP levels through interactions with the four ribonucleotide triphosphates. In Pseudomonas putida (strain ATCC 700007 / DSM 6899 / JCM 31910 / BCRC 17059 / LMG 24140 / F1), this protein is CTP synthase.